Reading from the N-terminus, the 381-residue chain is Arf-GAP with dual PH domain-containing protein 2 (381 aa).

An Arf-GAP domain is found at 9-132 (KRLLELLQAA…TAIDKAVSHP (124 aa)). A C4-type zinc finger spans residues 25–48 (CADCGAADPDWASYKLGIFICLHC). PH domains lie at 132-233 (PGNR…AARL) and 255-361 (NYLK…GVLS).

It is found in the cytoplasm. Its subcellular location is the cell membrane. Its function is as follows. GTPase-activating protein for the ADP ribosylation factor family (Potential). Binds phosphatidylinositol 3,4,5-trisphosphate (PtdInsP3) and inositol 1,3,4,5-tetrakisphosphate (InsP4). Possesses a stoichiometry of two binding sites for InsP4 with identical affinity. The chain is Arf-GAP with dual PH domain-containing protein 2 (Adap2) from Mus musculus (Mouse).